Consider the following 159-residue polypeptide: Globin CTT-W (159 aa).

Residues 1 to 16 form the signal peptide; sequence MKFLVILTLCIAGAIA. The 143-residue stretch at 17 to 159 folds into the Globin domain; sequence HCDKAPFIKA…HHAIVYSILE (143 aa). Residues His73 and His108 each coordinate heme b.

The protein belongs to the globin family.

This chain is Globin CTT-W (CTT-W), found in Chironomus thummi thummi (Midge).